The sequence spans 206 residues: Inner membrane-spanning protein YciB (206 aa).

Helical transmembrane passes span 22 to 42 (IYTA…LTYF), 50 to 70 (MQVI…FLHD), 76 to 96 (WKVT…HIMG), 118 to 138 (INWA…YVAF), and 148 to 168 (FKVF…GVYI). Basic and acidic residues predominate over residues 178–189 (LPKDKHQQRDQE). Positions 178–206 (LPKDKHQQRDQETQNDTQQELSGKNTEEK) are disordered. Polar residues predominate over residues 191 to 206 (QNDTQQELSGKNTEEK).

It belongs to the YciB family.

The protein localises to the cell inner membrane. Plays a role in cell envelope biogenesis, maintenance of cell envelope integrity and membrane homeostasis. This Vibrio atlanticus (strain LGP32) (Vibrio splendidus (strain Mel32)) protein is Inner membrane-spanning protein YciB.